The chain runs to 388 residues: Cytochrome b (388 aa).

The next 4 helical transmembrane spans lie at 38-58, 82-104, 119-139, and 185-205; these read FGCLAGICLVIQIVTGVFLAM, WLLRYMHANGASMFLIVVHLHIF, VWCLGVVIFLLMIVTAFIGYV, and FFSLHHLLPLILAGASLLHLA. Heme b-binding residues include histidine 88 and histidine 102. The heme b site is built by histidine 189 and histidine 203. Histidine 208 provides a ligand contact to a ubiquinone. A run of 4 helical transmembrane segments spans residues 231–251, 295–315, 327–347, and 354–373; these read FYVKDLVGRVASAIFFSIWIF, AGGVAAIAPVFISLLALPFFK, IHQGIFWLLLADCLLLGWIGC, and FVTIGQISSFFFFLFFAITP.

Belongs to the cytochrome b family. As to quaternary structure, the main subunits of complex b-c1 are: cytochrome b, cytochrome c1 and the Rieske protein. The cofactor is heme b.

Its subcellular location is the mitochondrion inner membrane. Its function is as follows. Component of the ubiquinol-cytochrome c reductase complex (complex III or cytochrome b-c1 complex) that is part of the mitochondrial respiratory chain. The b-c1 complex mediates electron transfer from ubiquinol to cytochrome c. Contributes to the generation of a proton gradient across the mitochondrial membrane that is then used for ATP synthesis. The protein is Cytochrome b (MT-CYB) of Zea mays (Maize).